The following is a 459-amino-acid chain: MAP kinase-interacting serine/threonine-protein kinase 2 (459 aa).

Residues 37–67 are disordered; sequence DFSPQCEARPDMPSSQPIDIPDAKKRGRKKK. The Nuclear localization signal motif lies at 60-66; that stretch reads KKRGRKK. S74 carries the phosphoserine modification. One can recognise a Protein kinase domain in the interval 84–368; it reads QLQEDVLGEG…AAQVLQHPWV (285 aa). ATP contacts are provided by residues 90–98 and K113; that span reads LGEGAHARV. 160–162 is a binding site for staurosporine; the sequence is EKM. D205 (proton acceptor) is an active-site residue. Residue E209 participates in staurosporine binding. 2 positions are modified to phosphothreonine: T244 and T249. Zn(2+)-binding residues include C299, C311, and C314. T379 bears the Phosphothreonine mark. S431 and S434 each carry phosphoserine. An MAP kinase binding motif is present at residues 438-442; that stretch reads LAQRR. S446 carries the phosphoserine modification. At T450 the chain carries Phosphothreonine.

It belongs to the protein kinase superfamily. CAMK Ser/Thr protein kinase family. In terms of assembly, interacts with ESR2 and EIF4E in the nucleus. Monomer. Interacts with the C-terminal regions of EIF4G1 and EIF4G2; this interaction is promoted when MAPK pathways are repressed but repressed upon ERK proteins activation. Also binds to dephosphorylated MAPK3/ERK1 and MAPK1/ERK2. Interaction with phosphorylated MAPK3/ERK1 and MAPK1/ERK2 protects it from dephosphorylation and inactivation. The cofactor is Mg(2+). Zn(2+) is required as a cofactor. In terms of processing, dual phosphorylation of Thr-244 and Thr-249 activates the kinase. Phosphorylation of Thr-379 activates the kinase. Phosphorylated upon arsenic trioxide As(2)O(3) treatment. Phosphorylated by MAPK1/ERK2, MAPK11 and MAPK14. Dephosphorylated by PP2A. Ubiquitously expressed in all tissues examined, with high levels in skeletal muscle and low levels in brain.

It localises to the cytoplasm. The protein resides in the nucleus. Its subcellular location is the PML body. It carries out the reaction L-seryl-[protein] + ATP = O-phospho-L-seryl-[protein] + ADP + H(+). It catalyses the reaction L-threonyl-[protein] + ATP = O-phospho-L-threonyl-[protein] + ADP + H(+). With respect to regulation, inhibited by CGP57380 and staurosporine. In terms of biological role, serine/threonine-protein kinase that phosphorylates SFPQ/PSF, HNRNPA1 and EIF4E. May play a role in the response to environmental stress and cytokines. Appears to regulate translation by phosphorylating EIF4E, thus increasing the affinity of this protein for the 7-methylguanosine-containing mRNA cap. Required for mediating PP2A-inhibition-induced EIF4E phosphorylation. Triggers EIF4E shuttling from cytoplasm to nucleus. Enhances the formation of EIF4F complex in pachytene spermatocytes, thus promoting mRNA translation during spermatogenesis. Displays a high basal kinase activity. Acts as a mediator of the suppressive effects of IFNgamma on hematopoiesis. Negative regulator for signals that control generation of arsenic trioxide As(2)O(3)-dependent apoptosis and anti-leukemic responses. Involved in anti-apoptotic signaling in response to serum withdrawal. The chain is MAP kinase-interacting serine/threonine-protein kinase 2 (Mknk2) from Mus musculus (Mouse).